The sequence spans 402 residues: Nicotinate phosphoribosyltransferase (402 aa).

H224 carries the post-translational modification Phosphohistidine; by autocatalysis.

The protein belongs to the NAPRTase family. Post-translationally, transiently phosphorylated on a His residue during the reaction cycle. Phosphorylation strongly increases the affinity for substrates and increases the rate of nicotinate D-ribonucleotide production. Dephosphorylation regenerates the low-affinity form of the enzyme, leading to product release.

The enzyme catalyses nicotinate + 5-phospho-alpha-D-ribose 1-diphosphate + ATP + H2O = nicotinate beta-D-ribonucleotide + ADP + phosphate + diphosphate. It participates in cofactor biosynthesis; NAD(+) biosynthesis; nicotinate D-ribonucleotide from nicotinate: step 1/1. In terms of biological role, catalyzes the synthesis of beta-nicotinate D-ribonucleotide from nicotinate and 5-phospho-D-ribose 1-phosphate at the expense of ATP. This is Nicotinate phosphoribosyltransferase from Neisseria meningitidis serogroup B (strain ATCC BAA-335 / MC58).